A 346-amino-acid chain; its full sequence is Phosphoribosylformylglycinamidine cyclo-ligase (346 aa).

This sequence belongs to the AIR synthase family.

Its subcellular location is the cytoplasm. It catalyses the reaction 2-formamido-N(1)-(5-O-phospho-beta-D-ribosyl)acetamidine + ATP = 5-amino-1-(5-phospho-beta-D-ribosyl)imidazole + ADP + phosphate + H(+). Its pathway is purine metabolism; IMP biosynthesis via de novo pathway; 5-amino-1-(5-phospho-D-ribosyl)imidazole from N(2)-formyl-N(1)-(5-phospho-D-ribosyl)glycinamide: step 2/2. This chain is Phosphoribosylformylglycinamidine cyclo-ligase, found in Shewanella pealeana (strain ATCC 700345 / ANG-SQ1).